The following is a 147-amino-acid chain: DNA-directed RNA polymerase RPB6 homolog (147 aa).

This sequence belongs to the archaeal RpoK/eukaryotic RPB6 RNA polymerase subunit family. In terms of assembly, part of the viral DNA-directed RNA polymerase that consists of 8 polII-like subunits (RPB1, RPB2, RPB3, RPB5, RPB6, RPB7, RPB9, RPB10), a capping enzyme and a termination factor.

The protein localises to the host cytoplasm. Its subcellular location is the virion. Its function is as follows. Component of the DNA-directed RNA polymerase (RNAP) that catalyzes the transcription in the cytoplasm of viral DNA into RNA using the four ribonucleoside triphosphates as substrates. This is DNA-directed RNA polymerase RPB6 homolog from Ornithodoros (relapsing fever ticks).